A 207-amino-acid polypeptide reads, in one-letter code: Large ribosomal subunit protein uL4 (207 aa).

The segment at histidine 49–serine 77 is disordered. Basic residues predominate over residues glycine 60 to glycine 71.

The protein belongs to the universal ribosomal protein uL4 family. In terms of assembly, part of the 50S ribosomal subunit.

Functionally, one of the primary rRNA binding proteins, this protein initially binds near the 5'-end of the 23S rRNA. It is important during the early stages of 50S assembly. It makes multiple contacts with different domains of the 23S rRNA in the assembled 50S subunit and ribosome. Forms part of the polypeptide exit tunnel. The sequence is that of Large ribosomal subunit protein uL4 from Levilactobacillus brevis (strain ATCC 367 / BCRC 12310 / CIP 105137 / JCM 1170 / LMG 11437 / NCIMB 947 / NCTC 947) (Lactobacillus brevis).